The primary structure comprises 298 residues: Ribosomal RNA small subunit methyltransferase H (298 aa).

S-adenosyl-L-methionine contacts are provided by residues 46–48 (GGH), Asp65, Phe92, Asp108, and His115.

This sequence belongs to the methyltransferase superfamily. RsmH family.

Its subcellular location is the cytoplasm. The catalysed reaction is cytidine(1402) in 16S rRNA + S-adenosyl-L-methionine = N(4)-methylcytidine(1402) in 16S rRNA + S-adenosyl-L-homocysteine + H(+). Its function is as follows. Specifically methylates the N4 position of cytidine in position 1402 (C1402) of 16S rRNA. In Nostoc punctiforme (strain ATCC 29133 / PCC 73102), this protein is Ribosomal RNA small subunit methyltransferase H.